Reading from the N-terminus, the 214-residue chain is A-type ATP synthase subunit D (214 aa).

The protein belongs to the V-ATPase D subunit family. As to quaternary structure, has multiple subunits with at least A(3), B(3), C, D, E, F, H, I and proteolipid K(x).

Its subcellular location is the cell membrane. Its function is as follows. Component of the A-type ATP synthase that produces ATP from ADP in the presence of a proton gradient across the membrane. The sequence is that of A-type ATP synthase subunit D from Pyrococcus horikoshii (strain ATCC 700860 / DSM 12428 / JCM 9974 / NBRC 100139 / OT-3).